A 262-amino-acid polypeptide reads, in one-letter code: Chondroitin proteoglycan 3 (262 aa).

Residues 1–17 form the signal peptide; that stretch reads MRSSFIFALLLIGAALA. Residues 37–68 form a disordered region; sequence FSGEASGEASGEASGEFSGEGSGEGSGELSPE. The segment covering 39-53 has biased composition (low complexity); the sequence is GEASGEASGEASGEF. 3 N-linked (GlcNAc...) asparagine glycosylation sites follow: asparagine 140, asparagine 148, and asparagine 224.

The chain is Chondroitin proteoglycan 3 (cpg-3) from Caenorhabditis briggsae.